We begin with the raw amino-acid sequence, 424 residues long: MASSNLIKQLQERGLVAQVTDEDALAERLAQGPVALYCGFDPTADSLHLGHLVPLLCLKRFQQAGHKPVALVGGATGLIGDPSFKAAERKLNTEETVQEWVAKIRKQVAPFLDFDCGENSAIAANNYDWFGSMNVLTFLRDIGKHFSVNQMINKEAVKQRLNRDDQGISFTEFSYNLLQGYDFACLNKLHGVALQIGGSDQWGNITSGIDLTRRLHQNQVFGLTVPLITKADGTKFGKTEGGAVWLDPKKTSPYKFYQFWINTADADVYRFLKFFTFMDIEEINALEEEDKNSGKAPRAQYVLAEQVTRLVHGEEGLVAAKRITECLFSGSLSALSEADFEQLAQDGVPMVEMEKGADLMQALVDAELQPSRGQARKTIASNAVTINGEKQSDPEYIFNDEDRLFGRYTLLRRGKKNYCLICWK.

Tyr37 provides a ligand contact to L-tyrosine. The 'HIGH' region signature appears at 42 to 51 (PTADSLHLGH). L-tyrosine-binding residues include Tyr175 and Gln179. The 'KMSKS' region motif lies at 235–239 (KFGKT). Position 238 (Lys238) interacts with ATP. Positions 357–414 (ADLMQALVDAELQPSRGQARKTIASNAVTINGEKQSDPEYIFNDEDRLFGRYTLLRRG) constitute an S4 RNA-binding domain.

The protein belongs to the class-I aminoacyl-tRNA synthetase family. TyrS type 1 subfamily. In terms of assembly, homodimer.

It localises to the cytoplasm. It catalyses the reaction tRNA(Tyr) + L-tyrosine + ATP = L-tyrosyl-tRNA(Tyr) + AMP + diphosphate + H(+). Functionally, catalyzes the attachment of tyrosine to tRNA(Tyr) in a two-step reaction: tyrosine is first activated by ATP to form Tyr-AMP and then transferred to the acceptor end of tRNA(Tyr). The polypeptide is Tyrosine--tRNA ligase (Salmonella enteritidis PT4 (strain P125109)).